The chain runs to 92 residues: Small ribosomal subunit protein uS19 (92 aa).

The protein belongs to the universal ribosomal protein uS19 family.

Functionally, protein S19 forms a complex with S13 that binds strongly to the 16S ribosomal RNA. In Brucella anthropi (strain ATCC 49188 / DSM 6882 / CCUG 24695 / JCM 21032 / LMG 3331 / NBRC 15819 / NCTC 12168 / Alc 37) (Ochrobactrum anthropi), this protein is Small ribosomal subunit protein uS19.